Here is an 819-residue protein sequence, read N- to C-terminus: Meiotically up-regulated gene 45 protein (819 aa).

A helical membrane pass occupies residues 797–817; sequence AMCLLTLLIGIYLILQVVFIY.

The protein resides in the membrane. Has a role in meiosis. The polypeptide is Meiotically up-regulated gene 45 protein (mug45) (Schizosaccharomyces pombe (strain 972 / ATCC 24843) (Fission yeast)).